Here is a 599-residue protein sequence, read N- to C-terminus: Aspartate--tRNA(Asp/Asn) ligase (599 aa).

E180 is an L-aspartate binding site. An aspartate region spans residues 204-207; sequence QLLK. R226 lines the L-aspartate pocket. ATP contacts are provided by residues 226-228 and Q235; that span reads RDE. H457 contacts L-aspartate. E491 serves as a coordination point for ATP. Residue R498 coordinates L-aspartate. 543–546 serves as a coordination point for ATP; sequence GWDR. The tract at residues 565 to 599 is disordered; that stretch reads KAGGGRDPLTGAPAPISDEQRAETGVDYDPDADEN. Positions 590–599 are enriched in acidic residues; it reads VDYDPDADEN.

The protein belongs to the class-II aminoacyl-tRNA synthetase family. Type 1 subfamily. Homodimer.

It is found in the cytoplasm. The enzyme catalyses tRNA(Asx) + L-aspartate + ATP = L-aspartyl-tRNA(Asx) + AMP + diphosphate. Its function is as follows. Aspartyl-tRNA synthetase with relaxed tRNA specificity since it is able to aspartylate not only its cognate tRNA(Asp) but also tRNA(Asn). Reaction proceeds in two steps: L-aspartate is first activated by ATP to form Asp-AMP and then transferred to the acceptor end of tRNA(Asp/Asn). In Bifidobacterium longum (strain NCC 2705), this protein is Aspartate--tRNA(Asp/Asn) ligase.